A 374-amino-acid chain; its full sequence is 4-hydroxy-3-methylbut-2-en-1-yl diphosphate synthase (flavodoxin) (374 aa).

[4Fe-4S] cluster-binding residues include cysteine 270, cysteine 273, cysteine 305, and glutamate 312.

It belongs to the IspG family. The cofactor is [4Fe-4S] cluster.

It catalyses the reaction (2E)-4-hydroxy-3-methylbut-2-enyl diphosphate + oxidized [flavodoxin] + H2O + 2 H(+) = 2-C-methyl-D-erythritol 2,4-cyclic diphosphate + reduced [flavodoxin]. It functions in the pathway isoprenoid biosynthesis; isopentenyl diphosphate biosynthesis via DXP pathway; isopentenyl diphosphate from 1-deoxy-D-xylulose 5-phosphate: step 5/6. In terms of biological role, converts 2C-methyl-D-erythritol 2,4-cyclodiphosphate (ME-2,4cPP) into 1-hydroxy-2-methyl-2-(E)-butenyl 4-diphosphate. The sequence is that of 4-hydroxy-3-methylbut-2-en-1-yl diphosphate synthase (flavodoxin) from Yersinia enterocolitica serotype O:8 / biotype 1B (strain NCTC 13174 / 8081).